The primary structure comprises 229 residues: Octanoyltransferase (229 aa).

The BPL/LPL catalytic domain occupies 45–220; it reads ATAVDELWVV…ELARQFCFVL (176 aa). Substrate contacts are provided by residues 84–91, 151–153, and 164–166; these read RGGQVTYH, ALG, and GVA. Catalysis depends on C182, which acts as the Acyl-thioester intermediate.

It belongs to the LipB family.

It is found in the cytoplasm. It catalyses the reaction octanoyl-[ACP] + L-lysyl-[protein] = N(6)-octanoyl-L-lysyl-[protein] + holo-[ACP] + H(+). It participates in protein modification; protein lipoylation via endogenous pathway; protein N(6)-(lipoyl)lysine from octanoyl-[acyl-carrier-protein]: step 1/2. Functionally, catalyzes the transfer of endogenously produced octanoic acid from octanoyl-acyl-carrier-protein onto the lipoyl domains of lipoate-dependent enzymes. Lipoyl-ACP can also act as a substrate although octanoyl-ACP is likely to be the physiological substrate. In Xylella fastidiosa (strain 9a5c), this protein is Octanoyltransferase.